Here is a 139-residue protein sequence, read N- to C-terminus: Large ribosomal subunit protein uL16c (139 aa).

The protein belongs to the universal ribosomal protein uL16 family. Part of the 50S ribosomal subunit.

Its subcellular location is the plastid. The protein localises to the chloroplast. This Cryptomeria japonica (Japanese cedar) protein is Large ribosomal subunit protein uL16c.